Reading from the N-terminus, the 111-residue chain is MSYPISAQPQGVQGYMTSNSSQWNSDVFDCCEDMGVCLCGTFVPCILACKVSQDFGECCCLPCLFGSILAVRTGIRERYHIEGSICKDWVCLSFCGPCALCQMARELKTRN.

Belongs to the cornifelin family.

The protein is Cornifelin homolog A (cnfn-a) of Xenopus laevis (African clawed frog).